We begin with the raw amino-acid sequence, 212 residues long: Stem bromelain (212 aa).

Cystine bridges form between Cys-23-Cys-63 and Cys-57-Cys-96. Cys-26 is a catalytic residue. N-linked (GlcNAc...) asparagine glycosylation occurs at Asn-117. A disulfide bridge connects residues Cys-152 and Cys-199. The active site involves His-158.

The protein belongs to the peptidase C1 family.

The catalysed reaction is Broad specificity for cleavage of proteins, but strong preference for Z-Arg-Arg-|-NHMec among small molecule substrates.. Its function is as follows. Cysteine proteinase with a high level of diversity in substrate specificity. The chain is Stem bromelain from Ananas comosus (Pineapple).